Consider the following 341-residue polypeptide: MSLMVVSMVCVGFFLLQGAWPHEGVHRKPSLLAHPGPLVKSEETVILQCWSDVRFQHFLLHREGKFKDTLHLIGEHHDGVSKANFSIGPMMQDLAGTYRCYGSVTHSPYQLSAPSDPLDIVITGLYEKPSLSAQPGPTVLAGESVTLSCSSRSSYDMYHLSREGEAHERRFSAGPKVNGTFQADFPLGPATHGGTYRCFGSFRDSPYEWSNSSDPLLVSVTGNPSNSWPSPTEPSSETGNPRHLHVLIGTSVVIILFILLLFFLLHRWCCNKKNAVVMDQEPAGNRTVNREDSDEQDPQEVTYAQLNHCVFTQRKITRPSQRPKTPPTDIIVYTELPNAEP.

An N-terminal signal peptide occupies residues 1-21 (MSLMVVSMVCVGFFLLQGAWP). The Extracellular segment spans residues 22–245 (HEGVHRKPSL…SETGNPRHLH (224 aa)). 2 Ig-like C2-type domains span residues 42–107 (EETV…VTHS) and 142–205 (GESV…FRDS). Intrachain disulfides connect cysteine 49–cysteine 100 and cysteine 149–cysteine 198. N-linked (GlcNAc...) asparagine glycosylation is found at asparagine 84, asparagine 178, and asparagine 211. A disordered region spans residues 220–239 (VTGNPSNSWPSPTEPSSETG). The segment covering 223–239 (NPSNSWPSPTEPSSETG) has biased composition (low complexity). A helical transmembrane segment spans residues 246–265 (VLIGTSVVIILFILLLFFLL). The Cytoplasmic portion of the chain corresponds to 266 to 341 (HRWCCNKKNA…VYTELPNAEP (76 aa)).

This sequence belongs to the immunoglobulin superfamily. Interacts with ARRB2.

The protein resides in the cell membrane. Receptor on natural killer (NK) cells for HLA-C alleles (HLA-Cw1, HLA-Cw3 and HLA-Cw7). Inhibits the activity of NK cells thus preventing cell lysis. This Homo sapiens (Human) protein is Killer cell immunoglobulin-like receptor 2DL3.